Consider the following 1289-residue polypeptide: Trafficking protein particle complex II-specific subunit 120 (1289 aa).

The span at 354 to 365 (STGISPVDSNSK) shows a compositional bias: polar residues. The tract at residues 354 to 374 (STGISPVDSNSKATASTTASS) is disordered. Phosphoserine is present on residues Ser-379 and Ser-387.

Belongs to the TRS120 family. As to quaternary structure, part of the multisubunit TRAPP (transport protein particle) II complex composed of BET3, BET5, TRS20, TRS23, TRS31, TRS33, TRS65, TRS120 and TRS130. Interacts directly with TRS65.

The protein localises to the golgi apparatus. It localises to the cis-Golgi network. In terms of biological role, specific subunit of the TRAPP II complex, a highly conserved vesicle tethering complex that functions in the late Golgi as a guanine nucleotide exchanger (GEF) for the Golgi YPT1 GTPase. TRS120 plays a role in the YPT GEF activity of TRAPP II in concert with the two other TRAPP II-specific subunits TRS65 and TRS130. The polypeptide is Trafficking protein particle complex II-specific subunit 120 (TRS120) (Saccharomyces cerevisiae (strain ATCC 204508 / S288c) (Baker's yeast)).